Here is an 860-residue protein sequence, read N- to C-terminus: Leucine--tRNA ligase (860 aa).

The 'HIGH' region motif lies at Pro-42–His-52. The 'KMSKS' region signature appears at Lys-619 to Ser-623. Residue Lys-622 coordinates ATP.

This sequence belongs to the class-I aminoacyl-tRNA synthetase family.

The protein resides in the cytoplasm. It carries out the reaction tRNA(Leu) + L-leucine + ATP = L-leucyl-tRNA(Leu) + AMP + diphosphate. The polypeptide is Leucine--tRNA ligase (Escherichia coli O9:H4 (strain HS)).